Consider the following 499-residue polypeptide: Centrosomal protein of 57 kDa (499 aa).

Positions 1–16 are enriched in low complexity; the sequence is MAAASVSAASDSQFSS. Residues 1–41 are disordered; that stretch reads MAAASVSAASDSQFSSVLAEPSRSNGNMVHHSSSPYVLYPP. The segment covering 22 to 35 has biased composition (polar residues); it reads SRSNGNMVHHSSSP. S53 is subject to Phosphoserine. Residues 58-239 form a centrosome localization domain (CLD) region; that stretch reads TFAYPESNSR…RAAELQSGIE (182 aa). The stretch at 63 to 242 forms a coiled coil; sequence ESNSRAIFSA…ELQSGIEANR (180 aa). 2 disordered regions span residues 255-275 and 424-476; these read TSTR…GFRN and LEKQ…SRKN. A mediates interaction with microtubules region spans residues 278–490; the sequence is GAQPHYRLCL…KDMQTLQNSL (213 aa). Positions 388–491 form a coiled coil; that stretch reads PSEELKDNLE…DMQTLQNSLQ (104 aa). The span at 427–443 shows a compositional bias: basic and acidic residues; that stretch reads QSTDKQKELKGNKKTLD. Positions 448–458 are enriched in low complexity; that stretch reads SSSRSSVITRT. The segment covering 460–474 has biased composition (basic and acidic residues); the sequence is SKKDFTKQRPGEKSR.

This sequence belongs to the translokin family. Homodimer and homooligomer. Interacts with FGF2 and RAP80. Does not interact with FGF1 or FGF2 isoform 24 kDa. Interacts with microtubules. As to expression, ubiquitous (at protein level).

The protein resides in the nucleus. It is found in the cytoplasm. Its subcellular location is the cytoskeleton. It localises to the microtubule organizing center. The protein localises to the centrosome. Centrosomal protein which may be required for microtubule attachment to centrosomes. May act by forming ring-like structures around microtubules. Mediates nuclear translocation and mitogenic activity of the internalized growth factor FGF2. This Rattus norvegicus (Rat) protein is Centrosomal protein of 57 kDa (Cep57).